A 524-amino-acid polypeptide reads, in one-letter code: Excitatory amino acid transporter 3 (524 aa).

The Cytoplasmic portion of the chain corresponds to 1–18 (MGKPARKGCDSKRFLKNN). Residues 19-38 (WLLLSTVVAVVLGIVIGVLV) form a helical membrane-spanning segment. At 39-61 (REYSNLSTLDKFYFAFPGEILMR) the chain is on the extracellular side. Residue Asn-43 is glycosylated (N-linked (GlcNAc...) asparagine). The chain crosses the membrane as a helical span at residues 62–82 (MLKLVILPLIVSSMITGVAAL). Over 83–93 (DSNVSGKIGLR) the chain is Cytoplasmic. Residues 94-114 (AVLYYFCTTIIAVILGIVLVV) traverse the membrane as a helical segment. Residues Tyr-98, Thr-101, and Thr-102 each coordinate Na(+). Residues 115–205 (SIKPGVTQKV…RTKEYRVVGL (91 aa)) lie on the Extracellular side of the membrane. Residues Asn-178 and Asn-195 are each glycosylated (N-linked (GlcNAc...) asparagine). The chain crosses the membrane as a helical span at residues 206–229 (YSDGINVLGLIVFCLVFGLVIGKM). Residues 230 to 238 (GEKGQILVD) are Cytoplasmic-facing. Residues 239–266 (FFNALSDATMKIVQIIMCYMPLGILFLI) traverse the membrane as a helical segment. The Extracellular portion of the chain corresponds to 267–286 (AGKIIEVEDWEIFRKLGLYM). The chain crosses the membrane as a helical span at residues 287 to 308 (VTVLSGLAIHSIVILPLIYFIV). Topologically, residues 309 to 313 (VRKNP) are cytoplasmic. Residues 314-344 (FRFAMGMTQALLTALMISSSSATLPVTFRCA) constitute an intramembrane region (discontinuously helical). L-aspartate contacts are provided by Ser-331 and Ser-333. The Cytoplasmic segment spans residues 345–353 (EEKNRVDKR). The helical transmembrane segment at 354–380 (ITRFVLPVGATINMDGTALYEAVAAVF) threads the bilayer. Positions 362, 364, 366, and 368 each coordinate Na(+). Thr-370 contributes to the L-aspartate binding site. The Extracellular portion of the chain corresponds to 381 to 393 (IAQLNDMDLSIGQ). The discontinuously helical intramembrane region spans 394–427 (IITISVTATAASIGAAGVPQAGLVTMVIVLSAVG). Positions 405, 406, and 408 each coordinate Na(+). Position 411 (Val-411) interacts with L-aspartate. Residues 428–440 (LPAEDVTLIIAVD) lie on the Extracellular side of the membrane. A helical membrane pass occupies residues 441–462 (WLLDRFRTVVNVLGDAFGTGIV). Positions 447, 448, and 451 each coordinate L-aspartate. Positions 451 and 455 each coordinate Na(+). Over 463–524 (EKLSKKELEQ…TISFTQTSQF (62 aa)) the chain is Cytoplasmic. A phosphoserine mark is found at Ser-517 and Ser-522.

Belongs to the dicarboxylate/amino acid:cation symporter (DAACS) (TC 2.A.23) family. SLC1A1 subfamily. Homotrimer. Interacts with ARL6IP5. Interacts with RTN2 (via N-terminus); the interaction promotes cell surface expression of SLC1A1. Interacts with SORCS2; this interaction is important for normal expression at the cell membrane. In terms of tissue distribution, brain, but also small intestine, kidney, liver and heart.

The protein localises to the cell membrane. It localises to the apical cell membrane. It is found in the synapse. The protein resides in the synaptosome. Its subcellular location is the early endosome membrane. The protein localises to the late endosome membrane. It localises to the recycling endosome membrane. The catalysed reaction is K(+)(in) + L-glutamate(out) + 3 Na(+)(out) + H(+)(out) = K(+)(out) + L-glutamate(in) + 3 Na(+)(in) + H(+)(in). It carries out the reaction K(+)(in) + L-aspartate(out) + 3 Na(+)(out) + H(+)(out) = K(+)(out) + L-aspartate(in) + 3 Na(+)(in) + H(+)(in). The enzyme catalyses D-aspartate(out) + K(+)(in) + 3 Na(+)(out) + H(+)(out) = D-aspartate(in) + K(+)(out) + 3 Na(+)(in) + H(+)(in). It catalyses the reaction K(+)(in) + L-cysteine(out) + 3 Na(+)(out) + H(+)(out) = K(+)(out) + L-cysteine(in) + 3 Na(+)(in) + H(+)(in). Sodium-dependent, high-affinity amino acid transporter that mediates the uptake of L-glutamate and also L-aspartate and D-aspartate. Can also transport L-cysteine. Functions as a symporter that transports one amino acid molecule together with two or three Na(+) ions and one proton, in parallel with the counter-transport of one K(+) ion. Mediates Cl(-) flux that is not coupled to amino acid transport; this avoids the accumulation of negative charges due to aspartate and Na(+) symport. Plays an important role in L-glutamate and L-aspartate reabsorption in renal tubuli. Plays a redundant role in the rapid removal of released glutamate from the synaptic cleft, which is essential for terminating the postsynaptic action of glutamate. Contributes to glutathione biosynthesis and protection against oxidative stress via its role in L-glutamate and L-cysteine transport. Negatively regulated by ARL6IP5. The protein is Excitatory amino acid transporter 3 (SLC1A1) of Oryctolagus cuniculus (Rabbit).